The chain runs to 445 residues: Probable glycine dehydrogenase (decarboxylating) subunit 1 (445 aa).

It belongs to the GcvP family. N-terminal subunit subfamily. As to quaternary structure, the glycine cleavage system is composed of four proteins: P, T, L and H. In this organism, the P 'protein' is a heterodimer of two subunits.

It carries out the reaction N(6)-[(R)-lipoyl]-L-lysyl-[glycine-cleavage complex H protein] + glycine + H(+) = N(6)-[(R)-S(8)-aminomethyldihydrolipoyl]-L-lysyl-[glycine-cleavage complex H protein] + CO2. In terms of biological role, the glycine cleavage system catalyzes the degradation of glycine. The P protein binds the alpha-amino group of glycine through its pyridoxal phosphate cofactor; CO(2) is released and the remaining methylamine moiety is then transferred to the lipoamide cofactor of the H protein. The protein is Probable glycine dehydrogenase (decarboxylating) subunit 1 of Anaeromyxobacter dehalogenans (strain 2CP-C).